The chain runs to 141 residues: Nucleoside diphosphate kinase (141 aa).

Residues K11, F59, R87, T93, R104, and N114 each coordinate ATP. H117 (pros-phosphohistidine intermediate) is an active-site residue.

This sequence belongs to the NDK family. As to quaternary structure, homotetramer. It depends on Mg(2+) as a cofactor.

Its subcellular location is the cytoplasm. It carries out the reaction a 2'-deoxyribonucleoside 5'-diphosphate + ATP = a 2'-deoxyribonucleoside 5'-triphosphate + ADP. It catalyses the reaction a ribonucleoside 5'-diphosphate + ATP = a ribonucleoside 5'-triphosphate + ADP. Major role in the synthesis of nucleoside triphosphates other than ATP. The ATP gamma phosphate is transferred to the NDP beta phosphate via a ping-pong mechanism, using a phosphorylated active-site intermediate. This Histophilus somni (strain 129Pt) (Haemophilus somnus) protein is Nucleoside diphosphate kinase.